Consider the following 1023-residue polypeptide: Solute carrier family 12 member 3 (1023 aa).

Residues 1-134 (MELPGDGVHL…EPPPEPPRFG (134 aa)) are Cytoplasmic-facing. Positions 91-131 (DPEQDDFKPPMYEETAGERMGGGDSSEEEEEEHKEPPPEPP) are disordered. Residues 135–164 (WVQGVMIRCMLNIWGVILYLRLPWITAQAG) traverse the membrane as a discontinuously helical segment. The Na(+) site is built by leucine 145 and tryptophan 148. The helical transmembrane segment at 165–186 (IGLTWVIILLSSFITGITGLST) threads the bilayer. The Cytoplasmic portion of the chain corresponds to 187 to 217 (SAIATNGKVKGGGTYFLISRSLGPELGGSIG). The helical transmembrane segment at 218–240 (LIFAFANAVAVAMHTVGFAETVT) threads the bilayer. At 241-252 (DLMRENGVVMVD) the chain is on the extracellular side. A run of 2 helical transmembrane segments spans residues 253–277 (PIND…AGME) and 278–300 (WESK…YIVG). Residues 301-335 (TIIPASPQKQAKGFFSYKAEIFAANFVPGWRGKEG) are Extracellular-facing. A discontinuously helical membrane pass occupies residues 336 to 357 (SFFGMFSIFFPSATGILAGANI). Positions 350, 351, and 352 each coordinate chloride. Residues 358–368 (SGDLKDPTVAI) lie on the Cytoplasmic side of the membrane. Residues 369-390 (PRGTLMAIFWTTISYLIISATI) traverse the membrane as a helical segment. The Extracellular portion of the chain corresponds to 391-452 (GACVVRDASG…YQSMSLVSAF (62 aa)). 2 N-linked (GlcNAc...) asparagine glycosylation sites follow: asparagine 403 and asparagine 414. Disulfide bonds link cysteine 415–cysteine 420 and cysteine 429–cysteine 435. Asparagine 432 carries N-linked (GlcNAc...) asparagine glycosylation. The helical transmembrane segment at 453 to 476 (APLISAGIFGATLSSALACLVSAP) threads the bilayer. Na(+) is bound by residues alanine 463, serine 466, and serine 467. Topologically, residues 477–506 (KVFQCLCKDQLYPLIGFFGKGYGKNAEPLR) are cytoplasmic. Residues 507-521 (AYLLTYVIAVCFVLI) form a helical membrane-spanning segment. The Extracellular segment spans residues 522–526 (AELNT). A helical membrane pass occupies residues 527-543 (IAPIISNFFLCSYALIN). Residue tyrosine 539 coordinates chloride. The Cytoplasmic segment spans residues 544–566 (FSCFHASVTNSPGWRPSFRFYSK). A run of 2 helical transmembrane segments spans residues 567–586 (WLSL…LTWW) and 587–598 (AALIAFGVVFFL). Residues 599-1023 (LGYTLYKKPA…QENVLTFYCQ (425 aa)) are Cytoplasmic-facing. Residues 614-629 (SVQASSYSMALNQCVG) are scissor helix. Residues leucine 647, arginine 654, valine 676, glycine 733, and leucine 772 each coordinate ATP.

Belongs to the SLC12A transporter family. Homodimer; adopts a domain-swap conformation at the scissor helices connecting the transmembrane domain and C-terminal domain. Expressed in urinary bladder, intestine, ovary, skeletal muscle, eye, brain, and kidney.

Its subcellular location is the cell membrane. The enzyme catalyses chloride(out) + Na(+)(out) = chloride(in) + Na(+)(in). With respect to regulation, inhibited by thiazide-type diuretics including polythiazide, metolazone, cyclothiazide, hydrochlorothiazide and chlorthalidone. Thiazide drugs, specifically inhibit SLC12A3/NCC transporter activity by competing with chloride for binding. Functionally, electroneutral sodium and chloride ion cotransporter, with a coupling ratio 1 Na(+):1 Cl(-). Mediates sodium and chloride reabsorption. The chain is Solute carrier family 12 member 3 (slc12a3) from Pseudopleuronectes americanus (Winter flounder).